Consider the following 204-residue polypeptide: Thymidine kinase (204 aa).

Residues 18–25 (GSMFSGKT) and 91–94 (DEGQ) each bind ATP. The active-site Proton acceptor is E92. Positions 148, 151, 180, and 183 each coordinate Zn(2+).

Belongs to the thymidine kinase family. Homotetramer.

Its subcellular location is the cytoplasm. It catalyses the reaction thymidine + ATP = dTMP + ADP + H(+). The sequence is that of Thymidine kinase from Bdellovibrio bacteriovorus (strain ATCC 15356 / DSM 50701 / NCIMB 9529 / HD100).